The following is a 375-amino-acid chain: CCA-adding enzyme (375 aa).

2 residues coordinate ATP: glycine 8 and arginine 11. Positions 8 and 11 each coordinate CTP. Positions 21 and 23 each coordinate Mg(2+). Arginine 91, arginine 137, and arginine 140 together coordinate ATP. Positions 91, 137, and 140 each coordinate CTP.

Belongs to the tRNA nucleotidyltransferase/poly(A) polymerase family. Bacterial CCA-adding enzyme type 2 subfamily. Mg(2+) is required as a cofactor.

The enzyme catalyses a tRNA precursor + 2 CTP + ATP = a tRNA with a 3' CCA end + 3 diphosphate. The catalysed reaction is a tRNA with a 3' CCA end + 2 CTP + ATP = a tRNA with a 3' CCACCA end + 3 diphosphate. Its function is as follows. Catalyzes the addition and repair of the essential 3'-terminal CCA sequence in tRNAs without using a nucleic acid template. Adds these three nucleotides in the order of C, C, and A to the tRNA nucleotide-73, using CTP and ATP as substrates and producing inorganic pyrophosphate. tRNA 3'-terminal CCA addition is required both for tRNA processing and repair. Also involved in tRNA surveillance by mediating tandem CCA addition to generate a CCACCA at the 3' terminus of unstable tRNAs. While stable tRNAs receive only 3'-terminal CCA, unstable tRNAs are marked with CCACCA and rapidly degraded. The chain is CCA-adding enzyme from Pseudomonas entomophila (strain L48).